The primary structure comprises 185 residues: Gastrokine-1 (185 aa).

A signal peptide spans 1-20 (MKFTIAFAGLLGVFLTPALA). The BRICHOS domain occupies 54–150 (NNGWNSWNAL…MCKGIPTYMA (97 aa)). C81 and C142 are joined by a disulfide.

It belongs to the gastrokine family. As to expression, highly expressed specifically in surface cells of the antrum mucosa from where it is secreted.

Its subcellular location is the secreted. It is found in the cytoplasmic granule. It localises to the golgi apparatus. Has mitogenic activity and may be involved in maintaining the integrity of the gastric mucosal epithelium. The chain is Gastrokine-1 (GKN1) from Sus scrofa (Pig).